Reading from the N-terminus, the 442-residue chain is Histidine--tRNA ligase (442 aa).

This sequence belongs to the class-II aminoacyl-tRNA synthetase family. As to quaternary structure, homodimer.

The protein resides in the cytoplasm. It catalyses the reaction tRNA(His) + L-histidine + ATP = L-histidyl-tRNA(His) + AMP + diphosphate + H(+). This is Histidine--tRNA ligase (hisS) from Treponema pallidum (strain Nichols).